A 396-amino-acid polypeptide reads, in one-letter code: ATP-dependent RNA helicase eIF4A (396 aa).

Residues 1 to 20 (MADKGLEDVPEGQIESNYDE) are disordered. The short motif at 23 to 51 (DSFDAMNLKAELLRGVYAYGFERPSAIQQ) is the Q motif element. In terms of domain architecture, Helicase ATP-binding spans 54-224 (IMPVIKGHDV…TKFMRDPVRI (171 aa)). 67-74 (AQSGTGKT) contacts ATP. Positions 172–175 (DEAD) match the DEAD box motif. The region spanning 235 to 396 (GIKQFYIAVE…EMPMNVADLI (162 aa)) is the Helicase C-terminal domain.

Belongs to the DEAD box helicase family. eIF4A subfamily. As to quaternary structure, component of the eIF4F complex, which composition varies with external and internal environmental conditions. It is composed of at least eIF4A, eIF4E and eIF4G.

It is found in the cytoplasm. It carries out the reaction ATP + H2O = ADP + phosphate + H(+). Functionally, ATP-dependent RNA helicase which is a subunit of the eIF4F complex involved in cap recognition and is required for mRNA binding to ribosome. In the current model of translation initiation, eIF4A unwinds RNA secondary structures in the 5'-UTR of mRNAs which is necessary to allow efficient binding of the small ribosomal subunit, and subsequent scanning for the initiator codon. This Phaeosphaeria nodorum (strain SN15 / ATCC MYA-4574 / FGSC 10173) (Glume blotch fungus) protein is ATP-dependent RNA helicase eIF4A (TIF1).